A 590-amino-acid polypeptide reads, in one-letter code: Muscarinic acetylcholine receptor M3 (590 aa).

Residues 1-67 are Extracellular-facing; that stretch reads MTLHNNNTTS…DPLGGHTIWQ (67 aa). 6 N-linked (GlcNAc...) asparagine glycosylation sites follow: Asn-6, Asn-7, Asn-15, Asn-41, Asn-48, and Asn-53. Residues 68 to 91 form a helical membrane-spanning segment; sequence VVFIAFLTGVLALVTIIGNILVIV. Residues 92-104 are Cytoplasmic-facing; the sequence is AFKVNKQLKTVNN. The helical transmembrane segment at 105–125 threads the bilayer; the sequence is YFLLSLACADLIIGVISMNLF. Topologically, residues 126–142 are extracellular; it reads TTYIIMNRWALGNLACD. Cys-141 and Cys-221 are disulfide-bonded. Residues 143–164 traverse the membrane as a helical segment; that stretch reads LWLSIDYVASNASVMNLLVISF. Over 165 to 184 the chain is Cytoplasmic; it reads DRYFSITRPLTYRAKRTTKR. The chain crosses the membrane as a helical span at residues 185–207; that stretch reads AGVMIGLAWVISFILWAPAILFW. The Extracellular segment spans residues 208–229; it reads QYFVGKRTVPPGECFIQFLSEP. The chain crosses the membrane as a helical span at residues 230 to 252; the sequence is TITFGTAIAAFYMPVTIMTILYW. Topologically, residues 253–492 are cytoplasmic; that stretch reads RIYKETEKRT…LIKEKKAAQT (240 aa). A Basolateral sorting signal motif is present at residues 275-281; the sequence is AEAENFV. The tract at residues 324–357 is disordered; the sequence is AEQMDQDHSSSDSWNNNDAAASLENSASSDEEDI. Over residues 334–345 the composition is skewed to low complexity; sequence SDSWNNNDAAAS. Ser-385 carries the phosphoserine modification. The tract at residues 398 to 419 is disordered; sequence SVGLERKPSKLQTQQSMDDGGS. A compositionally biased stretch (polar residues) spans 407 to 419; sequence KLQTQQSMDDGGS. A helical membrane pass occupies residues 493-513; that stretch reads LSAILLAFIITWTPYNIMVLV. Residues 514 to 527 lie on the Extracellular side of the membrane; that stretch reads NTFCDSCIPKTYWN. Residues 528–547 form a helical membrane-spanning segment; sequence LGYWLCYINSTVNPVCYALC. At 548–590 the chain is on the cytoplasmic side; sequence NKTFRNTFKMLLLCQCDKRKRRKQQYQQRQSVIFHKRVPEQAL.

Belongs to the G-protein coupled receptor 1 family. Muscarinic acetylcholine receptor subfamily. CHRM3 sub-subfamily. As to quaternary structure, homodimer; the dimers can form tetramers. Interacts with NALCN. Interacts with TMEM147.

It is found in the cell membrane. The protein resides in the postsynaptic cell membrane. It localises to the basolateral cell membrane. Its subcellular location is the endoplasmic reticulum membrane. The muscarinic acetylcholine receptor mediates various cellular responses, including inhibition of adenylate cyclase, breakdown of phosphoinositides and modulation of potassium channels through the action of G proteins. Primary transducing effect is Pi turnover. In Bos taurus (Bovine), this protein is Muscarinic acetylcholine receptor M3 (CHRM3).